We begin with the raw amino-acid sequence, 226 residues long: Pyridoxal 5'-phosphate synthase subunit Pdx2 (226 aa).

Position 52–54 (52–54 (GES)) interacts with L-glutamine. The active-site Nucleophile is the C87. L-glutamine-binding positions include R124 and 156-157 (IR). Active-site charge relay system residues include H199 and E201.

It belongs to the glutaminase PdxT/SNO family. In the presence of PdxS, forms a dodecamer of heterodimers. Only shows activity in the heterodimer.

The catalysed reaction is aldehydo-D-ribose 5-phosphate + D-glyceraldehyde 3-phosphate + L-glutamine = pyridoxal 5'-phosphate + L-glutamate + phosphate + 3 H2O + H(+). It catalyses the reaction L-glutamine + H2O = L-glutamate + NH4(+). The protein operates within cofactor biosynthesis; pyridoxal 5'-phosphate biosynthesis. In terms of biological role, catalyzes the hydrolysis of glutamine to glutamate and ammonia as part of the biosynthesis of pyridoxal 5'-phosphate. The resulting ammonia molecule is channeled to the active site of PdxS. This Plasmodium berghei protein is Pyridoxal 5'-phosphate synthase subunit Pdx2.